Consider the following 303-residue polypeptide: Recombination-associated protein RdgC (303 aa).

The protein belongs to the RdgC family.

It is found in the cytoplasm. The protein resides in the nucleoid. In terms of biological role, may be involved in recombination. This chain is Recombination-associated protein RdgC, found in Shewanella frigidimarina (strain NCIMB 400).